Reading from the N-terminus, the 443-residue chain is Threonine/serine transporter TdcC (443 aa).

11 helical membrane passes run 22-42, 44-64, 97-117, 140-160, 163-183, 207-227, 261-281, 319-339, 366-386, 389-409, and 423-443; these read TTWT…FFPI, AGFG…PIAF, GVVI…IYGV, FVAL…KDLM, VMSY…LSLI, ILVT…FSPI, MLMV…LSPA, ASII…LGTL, ISMI…PNIL, IEAM…MYAI, and DNVF…YKLF.

It belongs to the amino acid/polyamine transporter 2 family. SdaC/TdcC subfamily.

The protein resides in the cell inner membrane. It carries out the reaction L-threonine(in) + H(+)(in) = L-threonine(out) + H(+)(out). It catalyses the reaction L-serine(in) + H(+)(in) = L-serine(out) + H(+)(out). Its function is as follows. Involved in the import of threonine and serine into the cell, with the concomitant import of a proton (symport system). In Citrobacter koseri (strain ATCC BAA-895 / CDC 4225-83 / SGSC4696), this protein is Threonine/serine transporter TdcC.